The primary structure comprises 475 residues: Ankyrin repeat, SAM and basic leucine zipper domain-containing protein 1 (475 aa).

Residues Met-1–Gly-24 form a disordered region. 3 positions are modified to phosphoserine: Ser-17, Ser-18, and Ser-20. ANK repeat units follow at residues Glu-45–Ser-74, Tyr-78–Phe-107, Asp-110–Val-144, Arg-148–Ala-177, Asn-181–Leu-210, and Asp-214–Gly-243. An SAM domain is found at Ser-272–Ala-334.

In terms of assembly, interacts with DDX4, PIWIL1, RANBP9 and TDRD1.

The protein resides in the cytoplasm. In terms of biological role, plays a central role during spermatogenesis by repressing transposable elements and preventing their mobilization, which is essential for the germline integrity. Acts via the piRNA metabolic process, which mediates the repression of transposable elements during meiosis by forming complexes composed of piRNAs and Piwi proteins and governs the methylation and subsequent repression of transposons. Its association with pi-bodies suggests a participation in the primary piRNAs metabolic process. Required prior to the pachytene stage to facilitate the production of multiple types of piRNAs, including those associated with repeats involved in the regulation of retrotransposons. May act by mediating protein-protein interactions during germ cell maturation. The sequence is that of Ankyrin repeat, SAM and basic leucine zipper domain-containing protein 1 (ASZ1) from Loxodonta africana (African elephant).